The primary structure comprises 213 residues: Nucleoside triphosphate pyrophosphatase (213 aa).

Residue aspartate 79 is the Proton acceptor of the active site.

This sequence belongs to the Maf family. A divalent metal cation serves as cofactor.

It is found in the cytoplasm. It catalyses the reaction a ribonucleoside 5'-triphosphate + H2O = a ribonucleoside 5'-phosphate + diphosphate + H(+). It carries out the reaction a 2'-deoxyribonucleoside 5'-triphosphate + H2O = a 2'-deoxyribonucleoside 5'-phosphate + diphosphate + H(+). In terms of biological role, nucleoside triphosphate pyrophosphatase. May have a dual role in cell division arrest and in preventing the incorporation of modified nucleotides into cellular nucleic acids. The protein is Nucleoside triphosphate pyrophosphatase of Mycobacterium leprae (strain Br4923).